We begin with the raw amino-acid sequence, 344 residues long: Dihydroorotate dehydrogenase (quinone) (344 aa).

Residues 61 to 65 (AGLDK) and threonine 85 each bind FMN. Lysine 65 serves as a coordination point for substrate. A substrate-binding site is contributed by 110–114 (NRMGF). FMN-binding residues include asparagine 138 and asparagine 171. Asparagine 171 is a substrate binding site. The Nucleophile role is filled by serine 174. Asparagine 176 contacts substrate. Residues lysine 216 and threonine 244 each coordinate FMN. 245-246 (NT) contacts substrate. FMN contacts are provided by residues glycine 267, glycine 296, and 317 to 318 (YS).

It belongs to the dihydroorotate dehydrogenase family. Type 2 subfamily. Monomer. Requires FMN as cofactor.

It localises to the cell membrane. It catalyses the reaction (S)-dihydroorotate + a quinone = orotate + a quinol. It functions in the pathway pyrimidine metabolism; UMP biosynthesis via de novo pathway; orotate from (S)-dihydroorotate (quinone route): step 1/1. Catalyzes the conversion of dihydroorotate to orotate with quinone as electron acceptor. This chain is Dihydroorotate dehydrogenase (quinone), found in Psychrobacter sp. (strain PRwf-1).